A 421-amino-acid polypeptide reads, in one-letter code: Putative transporter AmpG 3 (421 aa).

Helical transmembrane passes span 6–26 (YLIGILLLGLISGLTFNLIFF), 41–61 (IIGAISLAAFPYCLKVIWSPF), 80–100 (WALVSQIFLILAMMWFLKRSP), 104–124 (LCITAIILFIIAFFSSTQDIV), 139–159 (LSIVFTFSSIGFRLGMLLGSV), 166–186 (IIFGWNTVYKFALFITMVGPI), 230–250 (LLLIILFVFLYKAADSIPMAM), 274–294 (LLIMIVGGTLGGILAAKIGIF), 297–317 (VLIGGVIQLLSPLMFMILATI), 324–344 (FIITITIQNFCSGFAGTIISI), 360–380 (AISASFSSLSRIILASLGGIC), and 388–408 (VFFLCNTLFSMLFIPIFYTIY).

It belongs to the major facilitator superfamily.

The protein resides in the cell inner membrane. The polypeptide is Putative transporter AmpG 3 (ampG3) (Rickettsia prowazekii (strain Madrid E)).